The following is a 71-amino-acid chain: Exodeoxyribonuclease 7 small subunit (71 aa).

It belongs to the XseB family. In terms of assembly, heterooligomer composed of large and small subunits.

Its subcellular location is the cytoplasm. It carries out the reaction Exonucleolytic cleavage in either 5'- to 3'- or 3'- to 5'-direction to yield nucleoside 5'-phosphates.. Functionally, bidirectionally degrades single-stranded DNA into large acid-insoluble oligonucleotides, which are then degraded further into small acid-soluble oligonucleotides. In Clostridium botulinum (strain Kyoto / Type A2), this protein is Exodeoxyribonuclease 7 small subunit.